The sequence spans 109 residues: Nucleoid-associated protein ASA_2087 (109 aa).

2 disordered regions span residues 1–23 (MFGKGGMGNLMKQAQQMQERMQK) and 87–109 (QSKSKMGELTGGMQLPPGMKLPF). Residues 11–23 (MKQAQQMQERMQK) are compositionally biased toward low complexity.

This sequence belongs to the YbaB/EbfC family. In terms of assembly, homodimer.

It localises to the cytoplasm. The protein resides in the nucleoid. Binds to DNA and alters its conformation. May be involved in regulation of gene expression, nucleoid organization and DNA protection. The polypeptide is Nucleoid-associated protein ASA_2087 (Aeromonas salmonicida (strain A449)).